The primary structure comprises 473 residues: MSILLFGVSHRSAPVSVLEQLSIDESEQVKIVDRVLQSPLVTEAMVLSTCNRVEVYAVVEAFHGGLSAIGQVLSDHSGMSMGELTKHAYVRYSEAAVEHLFAVASGLDSAVVGEQQVLGQVRRSYSAAEANRTVGRVLHELAQRTLSVGKRVHSETSIDAAGASVVSVALGIAERKLGGLGAKTAVVIGAGSMGALSSAHLTRAGIGKVHVLNRSLARAQRLAGKIRQSGVLAEARTLDRLAEVLTDADAVVSCTGAVAPVVSLADVHHALATARRDETTRPLVICDLGMPRDVDPAVAGLPGVWLIDVERVQREPSAHAASADVAAARHIVAAEVAGYLAGQRMAEVTPTVTALRQRAADVVEAELLRLDNRLPGLDSAERDEVARTVRRVVDKLLHAPTVRIKQLASAPGGDSYAEALRELFQLDQTAVDAVATAGELPVFSSGLDAGSGPQGADGPSAGPTPSAPNPSAE.

Substrate is bound by residues 49 to 52 (TCNR), S109, 114 to 116 (EQQ), and Q120. Residue C50 is the Nucleophile of the active site. 189 to 194 (GAGSMG) contacts NADP(+). A disordered region spans residues 445 to 473 (SGLDAGSGPQGADGPSAGPTPSAPNPSAE).

It belongs to the glutamyl-tRNA reductase family. As to quaternary structure, homodimer.

The enzyme catalyses (S)-4-amino-5-oxopentanoate + tRNA(Glu) + NADP(+) = L-glutamyl-tRNA(Glu) + NADPH + H(+). The protein operates within porphyrin-containing compound metabolism; protoporphyrin-IX biosynthesis; 5-aminolevulinate from L-glutamyl-tRNA(Glu): step 1/2. Catalyzes the NADPH-dependent reduction of glutamyl-tRNA(Glu) to glutamate 1-semialdehyde (GSA). The sequence is that of Glutamyl-tRNA reductase from Mycobacterium ulcerans (strain Agy99).